The sequence spans 283 residues: Foldase protein PrsA 3 (283 aa).

Positions 1–21 (MKKKKLFLGTIISCVVLALSA) are cleaved as a signal peptide. Cysteine 22 is lipidated: N-palmitoyl cysteine. Cysteine 22 carries the S-diacylglycerol cysteine lipid modification. A PpiC domain is found at 132–222 (KPEMKVSHIL…YGYHIIKVTD (91 aa)).

This sequence belongs to the PrsA family.

The protein resides in the cell membrane. It carries out the reaction [protein]-peptidylproline (omega=180) = [protein]-peptidylproline (omega=0). In terms of biological role, plays a major role in protein secretion by helping the post-translocational extracellular folding of several secreted proteins. Important for the secretion of the protective antigen. The three PsrA proteins in this organism show different but overlapping substrate specificities. The sequence is that of Foldase protein PrsA 3 (prsA3) from Bacillus anthracis.